Consider the following 258-residue polypeptide: Phosphoribosylaminoimidazole-succinocarboxamide synthase (258 aa).

The protein belongs to the SAICAR synthetase family.

It catalyses the reaction 5-amino-1-(5-phospho-D-ribosyl)imidazole-4-carboxylate + L-aspartate + ATP = (2S)-2-[5-amino-1-(5-phospho-beta-D-ribosyl)imidazole-4-carboxamido]succinate + ADP + phosphate + 2 H(+). The protein operates within purine metabolism; IMP biosynthesis via de novo pathway; 5-amino-1-(5-phospho-D-ribosyl)imidazole-4-carboxamide from 5-amino-1-(5-phospho-D-ribosyl)imidazole-4-carboxylate: step 1/2. The chain is Phosphoribosylaminoimidazole-succinocarboxamide synthase from Maricaulis maris (strain MCS10) (Caulobacter maris).